A 504-amino-acid chain; its full sequence is 26S proteasome non-ATPase regulatory subunit 5 (504 aa).

Ala-2 is modified (N-acetylalanine).

The protein belongs to the proteasome subunit S5B/HSM3 family. In terms of assembly, interacts with PSMC1, PSMC2, PSMD1 and PSMD6. Part of transient complex containing PSMD5, PSMC2, PSMC1 and PSMD2 formed during the assembly of the 26S proteasome.

Its function is as follows. Acts as a chaperone during the assembly of the 26S proteasome, specifically of the base subcomplex of the PA700/19S regulatory complex (RC). In the initial step of the base subcomplex assembly is part of an intermediate PSMD5:PSMC2:PSMC1:PSMD2 module which probably assembles with a PSMD10:PSMC4:PSMC5:PAAF1 module followed by dissociation of PSMD5. This Mus musculus (Mouse) protein is 26S proteasome non-ATPase regulatory subunit 5 (Psmd5).